The primary structure comprises 230 residues: Ribonuclease 3 (230 aa).

An RNase III domain is found at 1–134 (MKQLEELLST…FLGALLLDKG (134 aa)). Glutamate 47 contacts Mg(2+). Residue aspartate 51 is part of the active site. Positions 120 and 123 each coordinate Mg(2+). Glutamate 123 is a catalytic residue. In terms of domain architecture, DRBM spans 160 to 229 (DYKTCLQEFL…AKNALAQLSE (70 aa)).

It belongs to the ribonuclease III family. As to quaternary structure, homodimer. Mg(2+) serves as cofactor.

It is found in the cytoplasm. The catalysed reaction is Endonucleolytic cleavage to 5'-phosphomonoester.. Functionally, digests double-stranded RNA. Involved in the processing of primary rRNA transcript to yield the immediate precursors to the large and small rRNAs (23S and 16S). Processes some mRNAs, and tRNAs when they are encoded in the rRNA operon. Processes pre-crRNA and tracrRNA of type II CRISPR loci if present in the organism. This is Ribonuclease 3 from Streptococcus pyogenes serotype M3 (strain SSI-1).